The following is a 187-amino-acid chain: uncharacterized protein (187 aa).

The N-terminal stretch at 1 to 17 (MYAGGRVVRSAFARGKV) is a signal peptide. The N-palmitoyl cysteine moiety is linked to residue Cys-18. Residue Cys-18 is the site of S-diacylglycerol cysteine attachment.

It is found in the cell membrane. This is an uncharacterized protein from Treponema pallidum (strain Nichols).